The sequence spans 240 residues: Probable transcriptional regulatory protein SO_3401 (240 aa).

Belongs to the TACO1 family.

The protein resides in the cytoplasm. This is Probable transcriptional regulatory protein SO_3401 from Shewanella oneidensis (strain ATCC 700550 / JCM 31522 / CIP 106686 / LMG 19005 / NCIMB 14063 / MR-1).